Reading from the N-terminus, the 300-residue chain is Diphthine methyl ester synthase (300 aa).

Residues Leu-9, Asp-85, Gly-88, 113–114, and Leu-164 each bind S-adenosyl-L-methionine; that span reads SV. Ser-172 carries the post-translational modification Phosphoserine. S-adenosyl-L-methionine contacts are provided by Leu-222 and His-247. Residue Ser-298 is modified to Phosphoserine.

This sequence belongs to the diphthine synthase family.

The protein resides in the cytoplasm. It carries out the reaction 2-[(3S)-amino-3-carboxypropyl]-L-histidyl-[translation elongation factor 2] + 4 S-adenosyl-L-methionine = diphthine methyl ester-[translation elongation factor 2] + 4 S-adenosyl-L-homocysteine + 3 H(+). It functions in the pathway protein modification; peptidyl-diphthamide biosynthesis. S-adenosyl-L-methionine-dependent methyltransferase that catalyzes four methylations of the modified target histidine residue in translation elongation factor 2 (EF-2), to form an intermediate called diphthine methyl ester. The four successive methylation reactions represent the second step of diphthamide biosynthesis. The sequence is that of Diphthine methyl ester synthase (DPH5) from Saccharomyces cerevisiae (strain ATCC 204508 / S288c) (Baker's yeast).